A 156-amino-acid chain; its full sequence is Protein-export protein SecB (156 aa).

This sequence belongs to the SecB family. As to quaternary structure, homotetramer, a dimer of dimers. One homotetramer interacts with 1 SecA dimer.

The protein resides in the cytoplasm. One of the proteins required for the normal export of preproteins out of the cell cytoplasm. It is a molecular chaperone that binds to a subset of precursor proteins, maintaining them in a translocation-competent state. It also specifically binds to its receptor SecA. The sequence is that of Protein-export protein SecB from Aliivibrio fischeri (strain ATCC 700601 / ES114) (Vibrio fischeri).